We begin with the raw amino-acid sequence, 177 residues long: MSRIGKKPVALPKGVTAEIKGQTIEVKGPKGTRSFTATDDVTLAIEEGAVKVTPRGLSKRARQQWGMTRSMVENLTVGVSEGFKKELEIQGVGYRAQMQGKTLKLALGYSHDVNFETPEGVTISAPKQTEIVVEGIDQQLVGQVAANIREWRRPEPYKGKGIRYKGEVVFRKEGKKK.

It belongs to the universal ribosomal protein uL6 family. In terms of assembly, part of the 50S ribosomal subunit.

This protein binds to the 23S rRNA, and is important in its secondary structure. It is located near the subunit interface in the base of the L7/L12 stalk, and near the tRNA binding site of the peptidyltransferase center. The sequence is that of Large ribosomal subunit protein uL6 from Paracoccus denitrificans (strain Pd 1222).